The sequence spans 1477 residues: Ring canal kelch protein (1477 aa).

Disordered regions lie at residues 19-62, 76-96, and 108-137; these read LSNG…PGLG, LLQQQQQQHHHHQNPAAEGSG, and SQNSLDESSQKHVQRPNGKERGTVGQYSNE. Over residues 20 to 46 the composition is skewed to low complexity; sequence SNGNSNNNNQQQQQQQQGQNPQQPAQN. Phosphoserine occurs at positions 108 and 111. A BTB domain is found at 157-223; that stretch reads CDVILVADDV…VYTATVEVNE (67 aa). Kelch repeat units lie at residues 404–449, 450–496, 498–543, 545–592, 594–639, and 641–687; these read ILLV…VLGD, KVYA…VLNG, IYAV…VVHG, LYAV…VLNN, LYAV…AHDG, and LYVV…MIDK. A non-standard amino acid (selenocysteine) is located at residue Sec-690. Disordered regions lie at residues 744-841, 1119-1200, 1291-1326, 1359-1416, and 1446-1477; these read PAAP…PQRI, HSAA…GNGT, RDANASARPLHSTLSRLRNGEKRNPNRVAGNYQYED, PLLQ…FKPK, and PVSLSDNETETTSSQNNLPSTTNSNNLNEHND. Composition is skewed to low complexity over residues 763 to 813 and 820 to 839; these read APIG…ANNN and AAPAPSQQQQQQQAQPQQPQ. The span at 1125–1137 shows a compositional bias: polar residues; that stretch reads IPSSSNINANRTT. Residues 1166 to 1192 are compositionally biased toward low complexity; sequence KTTSTGSGKSVTLAKKTSTAAARSSSS. Composition is skewed to low complexity over residues 1374-1391 and 1456-1477; these read QQRRLQRQGAQAQQQSQQ and TTSSQNNLPSTTNSNNLNEHND.

In terms of tissue distribution, both proteins are expressed in ovaries, male testis, ovariectomized females, cuticle, salivary gland and imaginal disks. Kelch short protein is the predominant form and is also expressed in fat bodies. On entry into metamorphosis levels of full-length protein increase in testis and imaginal disks.

The protein resides in the cytoplasm. The protein localises to the cytoskeleton. Component of ring canals that regulates the flow of cytoplasm between cells. May be involved in the regulation of cytoplasm flow from nurse cells to the oocyte during oogenesis. Binds actin. This chain is Ring canal kelch protein (kel), found in Drosophila melanogaster (Fruit fly).